The chain runs to 283 residues: ATP synthase gamma chain (283 aa).

The protein belongs to the ATPase gamma chain family. As to quaternary structure, F-type ATPases have 2 components, CF(1) - the catalytic core - and CF(0) - the membrane proton channel. CF(1) has five subunits: alpha(3), beta(3), gamma(1), delta(1), epsilon(1). CF(0) has three main subunits: a, b and c.

It is found in the cell membrane. Its function is as follows. Produces ATP from ADP in the presence of a proton gradient across the membrane. The gamma chain is believed to be important in regulating ATPase activity and the flow of protons through the CF(0) complex. The protein is ATP synthase gamma chain of Desulforamulus reducens (strain ATCC BAA-1160 / DSM 100696 / MI-1) (Desulfotomaculum reducens).